The sequence spans 1238 residues: ATP-dependent helicase/nuclease subunit A (1238 aa).

The UvrD-like helicase ATP-binding domain occupies 12–490 (VSWTDDQWKA…IDLNANFRSR (479 aa)). 33–40 (AAAGSGKT) is a binding site for ATP. Residues 510 to 818 (GEILYDDNAS…RLVTIHSSKG (309 aa)) enclose the UvrD-like helicase C-terminal domain.

It belongs to the helicase family. AddA subfamily. As to quaternary structure, heterodimer of AddA and AddB/RexB. Mg(2+) is required as a cofactor.

The catalysed reaction is Couples ATP hydrolysis with the unwinding of duplex DNA by translocating in the 3'-5' direction.. The enzyme catalyses ATP + H2O = ADP + phosphate + H(+). Functionally, the heterodimer acts as both an ATP-dependent DNA helicase and an ATP-dependent, dual-direction single-stranded exonuclease. Recognizes the chi site generating a DNA molecule suitable for the initiation of homologous recombination. The AddA nuclease domain is required for chi fragment generation; this subunit has the helicase and 3' -&gt; 5' nuclease activities. The protein is ATP-dependent helicase/nuclease subunit A of Lysinibacillus sphaericus (strain C3-41).